The sequence spans 407 residues: MSGGSADYNREHGGPEGMDPDGVIESNWNEIVDNFDDMNLKESLLRGIYAYGFEKPSAIQQRAIIPCIKGYDVIAQAQSGTGKTATFAISILQQLEIEFKETQALVLAPTRELAQQIQKVILALGDYMGATCHACIGGTNVRNEMQKLQAEAPHIVVGTPGRVFDMLNRRYLSPKWIKMFVLDEADEMLSRGFKDQIYEIFQKLNTSIQVVLLSATMPTDVLEVTKKFMRDPIRILVKKEELTLEGIKQFYINVEREEWKLDTLCDLYETLTITQAVIFLNTRRKVDWLTEKMHARDFTVSALHGDMDQKERDVIMREFRSGSSRVLITTDLLARGIDVQQVSLVINYDLPTNRENYIHRIGRGGRFGRKGVAINFVTEEDKRILRDIETFYNTTVEEMPMNVADLI.

The interval 1-22 (MSGGSADYNREHGGPEGMDPDG) is disordered. The Q motif motif lies at 33–61 (DNFDDMNLKESLLRGIYAYGFEKPSAIQQ). The Helicase ATP-binding domain maps to 64 to 235 (IIPCIKGYDV…KKFMRDPIRI (172 aa)). 77–84 (AQSGTGKT) provides a ligand contact to ATP. Residue Thr159 is modified to Phosphothreonine. Positions 183–186 (DEAD) match the DEAD box motif. One can recognise a Helicase C-terminal domain in the interval 246–407 (GIKQFYINVE…EMPMNVADLI (162 aa)).

Belongs to the DEAD box helicase family. eIF4A subfamily. As to quaternary structure, eIF4F is a multi-subunit complex, the composition of which varies with external and internal environmental conditions. It is composed of at least EIF4A, EIF4E and EIF4G1/EIFFG3. Interacts with EIF4E. May interact with NOM1.

It carries out the reaction ATP + H2O = ADP + phosphate + H(+). Functionally, ATP-dependent RNA helicase which is a subunit of the eIF4F complex involved in cap recognition and is required for mRNA binding to ribosome. In the current model of translation initiation, eIF4A unwinds RNA secondary structures in the 5'-UTR of mRNAs which is necessary to allow efficient binding of the small ribosomal subunit, and subsequent scanning for the initiator codon. The chain is Eukaryotic initiation factor 4A-II (EIF4A2) from Bos taurus (Bovine).